We begin with the raw amino-acid sequence, 1233 residues long: Mitogen-activated protein kinase kinase kinase kinase 4 (1233 aa).

Position 2 is an N-acetylalanine (Ala2). Residue Ser5 is modified to Phosphoserine. One can recognise a Protein kinase domain in the interval 25 to 289; it reads FELVEVVGNG…EQLLKHPFIR (265 aa). ATP contacts are provided by residues 31 to 39 and Lys53; that span reads VGNGTYGQV. Asp152 (proton acceptor) is an active-site residue. 3 disordered regions span residues 305–348, 401–463, and 489–805; these read IDRT…VPGE, QKEQ…VERE, and QAML…ETES. Residues 316–337 are compositionally biased toward acidic residues; it reads DETEYEYSGSEEEEEEVPEQEG. Phosphoserine is present on residues Ser323 and Ser325. Residues 521-537 are compositionally biased toward basic and acidic residues; it reads PEPKPHYDPADRAREVQ. At Ser543 the chain carries Phosphoserine. Polar residues predominate over residues 544 to 559; it reads LKNNVSPVSRSHSFSD. Residues Ser619, Ser621, Ser629, and Ser646 each carry the phosphoserine modification. The span at 654 to 663 shows a compositional bias: basic and acidic residues; it reads LLWERVEKLV. A compositionally biased stretch (low complexity) spans 666–692; the sequence is PGSGSSSGSSNSGSQPGSHPGSQSGSG. 3 positions are modified to phosphoserine: Ser691, Ser703, and Ser706. 2 stretches are compositionally biased toward basic and acidic residues: residues 713–726 and 741–756; these read SAAK…EVFR and KELR…HKVT. The segment covering 766–781 has biased composition (acidic residues); the sequence is GTTDEEEEDVEQEGAD. The span at 783-803 shows a compositional bias: polar residues; sequence STSGPEDTRAASSPNLSNGET. Ser785, Ser794, Ser795, Ser799, and Ser817 each carry phosphoserine. Thr822 is modified (phosphothreonine). 4 positions are modified to phosphoserine: Ser846, Ser849, Ser894, and Ser907. Residues 852 to 1206 form a mediates interaction with RAP2A region; sequence PFIDPRLLQI…LKFLCGRNDK (355 aa). The 288-residue stretch at 920–1207 folds into the CNH domain; the sequence is NSEILCAALW…KFLCGRNDKV (288 aa).

The protein belongs to the protein kinase superfamily. STE Ser/Thr protein kinase family. STE20 subfamily. Interacts with the SH3 domain of the adapter proteins Nck. Interacts (via its CNH regulatory domain) with ATL1 (via the N-terminal region). Interacts with RAP2A (GTP-bound form preferentially). Requires Mg(2+) as cofactor. As to expression, appears to be ubiquitous, expressed in all tissue types examined. Highest levels observed in heart and brain.

Its subcellular location is the cytoplasm. The catalysed reaction is L-seryl-[protein] + ATP = O-phospho-L-seryl-[protein] + ADP + H(+). The enzyme catalyses L-threonyl-[protein] + ATP = O-phospho-L-threonyl-[protein] + ADP + H(+). Serine/threonine kinase that plays a role in the response to environmental stress and cytokines such as TNF-alpha. Appears to act upstream of the JUN N-terminal pathway. Activator of the Hippo signaling pathway which plays a pivotal role in organ size control and tumor suppression by restricting proliferation and promoting apoptosis. MAP4Ks act in parallel to and are partially redundant with STK3/MST2 and STK4/MST2 in the phosphorylation and activation of LATS1/2, and establish MAP4Ks as components of the expanded Hippo pathway. Phosphorylates SMAD1 on Thr-322. This Mus musculus (Mouse) protein is Mitogen-activated protein kinase kinase kinase kinase 4 (Map4k4).